The primary structure comprises 270 residues: Hydroxyethylthiazole kinase (270 aa).

Met-47 contacts substrate. Arg-123 and Ser-170 together coordinate ATP. Substrate is bound at residue Gly-197.

The protein belongs to the Thz kinase family. The cofactor is Mg(2+).

The enzyme catalyses 5-(2-hydroxyethyl)-4-methylthiazole + ATP = 4-methyl-5-(2-phosphooxyethyl)-thiazole + ADP + H(+). The protein operates within cofactor biosynthesis; thiamine diphosphate biosynthesis; 4-methyl-5-(2-phosphoethyl)-thiazole from 5-(2-hydroxyethyl)-4-methylthiazole: step 1/1. Its function is as follows. Catalyzes the phosphorylation of the hydroxyl group of 4-methyl-5-beta-hydroxyethylthiazole (THZ). The protein is Hydroxyethylthiazole kinase of Syntrophus aciditrophicus (strain SB).